Here is a 384-residue protein sequence, read N- to C-terminus: Carbamoyl phosphate synthase small chain (384 aa).

The segment at 1-195 (MLPVLPPALL…LGRGHGTLAD (195 aa)) is CPSase. Ser50, Gly247, and Gly249 together coordinate L-glutamine. The region spanning 199-384 (HVVAYDFGVK…RFVALMQERA (186 aa)) is the Glutamine amidotransferase type-1 domain. Cys275 serves as the catalytic Nucleophile. L-glutamine-binding residues include Leu276, Gln279, Asn317, Gly319, and Phe320. Catalysis depends on residues His359 and Glu361.

This sequence belongs to the CarA family. In terms of assembly, composed of two chains; the small (or glutamine) chain promotes the hydrolysis of glutamine to ammonia, which is used by the large (or ammonia) chain to synthesize carbamoyl phosphate. Tetramer of heterodimers (alpha,beta)4.

The catalysed reaction is hydrogencarbonate + L-glutamine + 2 ATP + H2O = carbamoyl phosphate + L-glutamate + 2 ADP + phosphate + 2 H(+). It carries out the reaction L-glutamine + H2O = L-glutamate + NH4(+). The protein operates within amino-acid biosynthesis; L-arginine biosynthesis; carbamoyl phosphate from bicarbonate: step 1/1. It functions in the pathway pyrimidine metabolism; UMP biosynthesis via de novo pathway; (S)-dihydroorotate from bicarbonate: step 1/3. Small subunit of the glutamine-dependent carbamoyl phosphate synthetase (CPSase). CPSase catalyzes the formation of carbamoyl phosphate from the ammonia moiety of glutamine, carbonate, and phosphate donated by ATP, constituting the first step of 2 biosynthetic pathways, one leading to arginine and/or urea and the other to pyrimidine nucleotides. The small subunit (glutamine amidotransferase) binds and cleaves glutamine to supply the large subunit with the substrate ammonia. In Rubrivivax gelatinosus (strain NBRC 100245 / IL144), this protein is Carbamoyl phosphate synthase small chain.